The sequence spans 219 residues: Trafficking protein particle complex subunit 4 (219 aa).

Belongs to the TRAPP small subunits family. TRAPPC4 subfamily. As to quaternary structure, component of the multisubunit TRAPP (transport protein particle) complex, which includes at least TRAPPC2, TRAPPC2L, TRAPPC3, TRAPPC3L, TRAPPC4, TRAPPC5, TRAPPC8, TRAPPC9, TRAPPC10, TRAPPC11 and TRAPPC12. Interacts with SDC2.

It localises to the postsynaptic cell membrane. The protein localises to the golgi apparatus membrane. It is found in the endoplasmic reticulum. The protein resides in the vesicle. Its function is as follows. Core component of the TRAPP complexes which has a function of guanine nucleotide exchange factor activity for Rab1 GTPase. Plays a role in vesicular transport from endoplasmic reticulum to Golgi and autophagy. May play a role in dendrite postsynaptic membrane trafficking. This Homo sapiens (Human) protein is Trafficking protein particle complex subunit 4.